The sequence spans 373 residues: Probable pectin lyase D (373 aa).

Positions 1–24 (MKYAAALTAVAALAARAAAVGVSG) are cleaved as a signal peptide. Disulfide bonds link C82–C101 and C91–C225. N-linked (GlcNAc...) asparagine glycosylation occurs at N128. R255 is a catalytic residue. N274 is a glycosylation site (N-linked (GlcNAc...) asparagine). C321 and C329 are oxidised to a cystine. N-linked (GlcNAc...) asparagine glycosylation occurs at N348. A compositionally biased stretch (low complexity) spans 354 to 366 (LPSADAASTSPAS). The interval 354-373 (LPSADAASTSPASNAGQGNL) is disordered.

Belongs to the polysaccharide lyase 1 family.

The protein resides in the secreted. The enzyme catalyses Eliminative cleavage of (1-&gt;4)-alpha-D-galacturonan methyl ester to give oligosaccharides with 4-deoxy-6-O-methyl-alpha-D-galact-4-enuronosyl groups at their non-reducing ends.. In terms of biological role, pectinolytic enzymes consist of four classes of enzymes: pectin lyase, polygalacturonase, pectin methylesterase and rhamnogalacturonase. Among pectinolytic enzymes, pectin lyase is the most important in depolymerization of pectin, since it cleaves internal glycosidic bonds of highly methylated pectins. In Aspergillus niger (strain ATCC MYA-4892 / CBS 513.88 / FGSC A1513), this protein is Probable pectin lyase D (pelD).